A 259-amino-acid chain; its full sequence is Ribonuclease PH (259 aa).

Residues R88 and 126-128 (GTR) each bind phosphate.

Belongs to the RNase PH family. As to quaternary structure, homohexameric ring arranged as a trimer of dimers.

It carries out the reaction tRNA(n+1) + phosphate = tRNA(n) + a ribonucleoside 5'-diphosphate. Phosphorolytic 3'-5' exoribonuclease that plays an important role in tRNA 3'-end maturation. Removes nucleotide residues following the 3'-CCA terminus of tRNAs; can also add nucleotides to the ends of RNA molecules by using nucleoside diphosphates as substrates, but this may not be physiologically important. Probably plays a role in initiation of 16S rRNA degradation (leading to ribosome degradation) during starvation. This is Ribonuclease PH from Mycobacterium bovis (strain BCG / Pasteur 1173P2).